We begin with the raw amino-acid sequence, 316 residues long: Pantothenate kinase (316 aa).

Residue 95–102 participates in ATP binding; it reads GSVSVGKS.

The protein belongs to the prokaryotic pantothenate kinase family.

Its subcellular location is the cytoplasm. It carries out the reaction (R)-pantothenate + ATP = (R)-4'-phosphopantothenate + ADP + H(+). Its pathway is cofactor biosynthesis; coenzyme A biosynthesis; CoA from (R)-pantothenate: step 1/5. This chain is Pantothenate kinase, found in Actinobacillus pleuropneumoniae serotype 7 (strain AP76).